The primary structure comprises 197 residues: RNA chaperone ProQ (197 aa).

A disordered region spans residues arginine 115 to glutamate 138. A compositionally biased stretch (basic residues) spans alanine 117–alanine 131.

This sequence belongs to the ProQ family.

The protein localises to the cytoplasm. Its function is as follows. RNA chaperone with significant RNA binding, RNA strand exchange and RNA duplexing activities. This Haemophilus influenzae (strain ATCC 51907 / DSM 11121 / KW20 / Rd) protein is RNA chaperone ProQ.